We begin with the raw amino-acid sequence, 238 residues long: Ribonuclease PH (238 aa).

Residues R86 and 124 to 126 (GTR) each bind phosphate.

This sequence belongs to the RNase PH family. As to quaternary structure, homohexameric ring arranged as a trimer of dimers.

The enzyme catalyses tRNA(n+1) + phosphate = tRNA(n) + a ribonucleoside 5'-diphosphate. Phosphorolytic 3'-5' exoribonuclease that plays an important role in tRNA 3'-end maturation. Removes nucleotide residues following the 3'-CCA terminus of tRNAs; can also add nucleotides to the ends of RNA molecules by using nucleoside diphosphates as substrates, but this may not be physiologically important. Probably plays a role in initiation of 16S rRNA degradation (leading to ribosome degradation) during starvation. The sequence is that of Ribonuclease PH from Vibrio parahaemolyticus serotype O3:K6 (strain RIMD 2210633).